The primary structure comprises 625 residues: DNA mismatch repair protein MutL (625 aa).

Belongs to the DNA mismatch repair MutL/HexB family.

Its function is as follows. This protein is involved in the repair of mismatches in DNA. It is required for dam-dependent methyl-directed DNA mismatch repair. May act as a 'molecular matchmaker', a protein that promotes the formation of a stable complex between two or more DNA-binding proteins in an ATP-dependent manner without itself being part of a final effector complex. In Xanthomonas axonopodis pv. citri (strain 306), this protein is DNA mismatch repair protein MutL.